The sequence spans 318 residues: MIKKRNTTKISVIGAGSVGATTAYALMLSGVATEIVLVDVNKAKTEGEAMDLSHGADFVQPVNILSGDYKDTESSDIVVITAGAAQKVGETRLQLINKNINIFKSIIPEVVKYNKDAILLVVSNPVDVLSYVTYKLSGFPKERVIGSGTVLDTSRLKHEIGKRYKIDPRNVNTYIMGEHGDSEIATWSVTNIQNIKIDEYANKENLEYNDNFRKEVYENVKNAAYEVINRKGATFYAIALAVTRIVKAILGDEKTILPVSTLVENYYGIKDVYLGMPCIVGGSGVEKALSIDLNKTEASKLVKSAETLKNTLNNASGL.

NAD(+)-binding positions include valine 18, aspartate 39, lysine 44, tyrosine 69, and 83 to 84 (GA). Glutamine 86 and arginine 92 together coordinate substrate. Residues serine 105, 122 to 124 (VSN), and serine 147 each bind NAD(+). 124–127 (NPVD) lines the substrate pocket. 152-155 (DTSR) lines the substrate pocket. Histidine 179 functions as the Proton acceptor in the catalytic mechanism. Tyrosine 225 carries the post-translational modification Phosphotyrosine. Residue threonine 234 participates in substrate binding.

Belongs to the LDH/MDH superfamily. LDH family. In terms of assembly, homotetramer.

It localises to the cytoplasm. It catalyses the reaction (S)-lactate + NAD(+) = pyruvate + NADH + H(+). Its pathway is fermentation; pyruvate fermentation to lactate; (S)-lactate from pyruvate: step 1/1. Its function is as follows. Catalyzes the conversion of lactate to pyruvate. This Clostridium botulinum (strain 657 / Type Ba4) protein is L-lactate dehydrogenase.